The following is a 184-amino-acid chain: UPF0397 protein SAOUHSC_03020 (184 aa).

5 helical membrane passes run 11–31 (VVAI…VVIP), 44–64 (AFLA…TGLV), 77–97 (AWWS…WIGL), 116–136 (IGQI…LDIL), and 148–168 (QGVI…TILL).

It belongs to the UPF0397 family.

The protein resides in the cell membrane. This is UPF0397 protein SAOUHSC_03020 from Staphylococcus aureus (strain NCTC 8325 / PS 47).